A 147-amino-acid chain; its full sequence is Receptor activity-modifying protein 3 (147 aa).

An N-terminal signal peptide occupies residues 1–22; it reads MKTPAQRLHLLPLLLLLCGECA. Topologically, residues 23–112 are extracellular; that stretch reads QVCGCNETGM…CTVDRTHWED (90 aa). N-linked (GlcNAc...) asparagine glycans are attached at residues Asn28, Asn57, Asn70, and Asn102. Intrachain disulfides connect Cys39–Cys71 and Cys56–Cys103. Residues 113–137 traverse the membrane as a helical segment; sequence PPDEVLIPLIAVPVVLTVAMAGLVV. Over 138–147 the chain is Cytoplasmic; sequence WRSKHTDRLL.

The protein belongs to the RAMP family. In terms of assembly, heterodimer of CALCRL and RAMP3; interaction induces allosteric modulation of CALCRL function and ligand specificity for adrenomedullin/ADM and intermedin/ADM2. Heterodimer of CALCR and RAMP3; interaction form the receptor complex AMYR3 for amylin/IAPP. Interacts with GPER1. Expressed predominantly in the testis, embryonic and adult brain and in kidney.

Its subcellular location is the cell membrane. It is found in the membrane. In terms of biological role, accessory protein that interacts with and modulates the function of G-protein coupled receptors including calcitonin gene-related peptide type 1 receptor (CALCRL), calcitonin receptor (CALCR) and G-protein coupled estrogen receptor 1 (GPER1). Required for the transport of CALCRL and GPER1 receptors to the plasma membrane. Plays a role in cardioprotection by reducing cardiac hypertrophy and perivascular fibrosis in a GPER1-dependent manner. Together with CALCRL, form a receptor complex for adrenomedullin/ADM and intermedin/ADM2. Together with CALCR, act as a receptor complex for amylin/IAPP. The protein is Receptor activity-modifying protein 3 of Mus musculus (Mouse).